Consider the following 218-residue polypeptide: DNA-binding protein HU 2 (218 aa).

The bacterial histone-like domain stretch occupies residues 1-91 (MNKAQLVEAI…QGFKDLVSGS (91 aa)). The tract at residues 101–218 (VKKAPKGSLS…TAKKATARKK (118 aa)) is disordered. The degenerate repeats region stretch occupies residues 118 to 218 (KAAGKKAAAK…TAKKATARKK (101 aa)). Low complexity predominate over residues 127 to 161 (KKATGAAKKTTGAAKKTSAAAKKTTAKKTTGAAKT). The segment covering 162 to 172 (TAKKTTAKKSA) has biased composition (basic residues). A compositionally biased stretch (low complexity) spans 173-182 (AKTTTAAAKK). Residues 183 to 218 (TAAKKAPAKKATAKKAPAKKSTARKTTAKKATARKK) are compositionally biased toward basic residues.

It belongs to the bacterial histone-like protein family. Long actinobacterial subfamily. As to quaternary structure, homodimer.

The protein resides in the cytoplasm. It is found in the nucleoid. Its function is as follows. Histone-like DNA-binding protein which is capable of wrapping DNA to stabilize it, and thus to prevent its denaturation under extreme environmental conditions. The chain is DNA-binding protein HU 2 (hup2) from Streptomyces coelicolor (strain ATCC BAA-471 / A3(2) / M145).